Reading from the N-terminus, the 580-residue chain is uncharacterized protein (580 aa).

This is an uncharacterized protein from Methanocaldococcus jannaschii (strain ATCC 43067 / DSM 2661 / JAL-1 / JCM 10045 / NBRC 100440) (Methanococcus jannaschii).